Reading from the N-terminus, the 391-residue chain is Protein-glutamate methylesterase/protein-glutamine glutaminase of group 2 operon (391 aa).

Residues 20–138 (RVMIVDDSVV…EPQAADIFKH (119 aa)) form the Response regulatory domain. Position 71 is a 4-aspartylphosphate (Asp-71). The 188-residue stretch at 196 to 383 (PTAPRVLLIG…PLNQIGPKVV (188 aa)) folds into the CheB-type methylesterase domain. Active-site residues include Ser-207, His-235, and Asp-331.

The protein belongs to the CheB family. In terms of processing, phosphorylated by CheA. Phosphorylation of the N-terminal regulatory domain activates the methylesterase activity.

The protein resides in the cytoplasm. It carries out the reaction [protein]-L-glutamate 5-O-methyl ester + H2O = L-glutamyl-[protein] + methanol + H(+). It catalyses the reaction L-glutaminyl-[protein] + H2O = L-glutamyl-[protein] + NH4(+). In terms of biological role, involved in chemotaxis. Part of a chemotaxis signal transduction system that modulates chemotaxis in response to various stimuli. Catalyzes the demethylation of specific methylglutamate residues introduced into the chemoreceptors (methyl-accepting chemotaxis proteins or MCP) by CheR. Also mediates the irreversible deamidation of specific glutamine residues to glutamic acid. This Rhodopseudomonas palustris (strain ATCC BAA-98 / CGA009) protein is Protein-glutamate methylesterase/protein-glutamine glutaminase of group 2 operon.